A 531-amino-acid polypeptide reads, in one-letter code: Flavin-containing monooxygenase 3 (531 aa).

FAD contacts are provided by residues 9-13 (GAGVS), Glu-32, 40-41 (LW), and 61-62 (NS). NADP(+)-binding positions include 60–61 (TN) and 195–198 (SGCD). The residue at position 401 (Ser-401) is a Phosphoserine. The helical transmembrane segment at 511 to 531 (YSHFLRLLAVPVLIALFLVLI) threads the bilayer.

This sequence belongs to the FMO family. The cofactor is FAD. Detected in liver and kidney (at protein level). Expressed in kidney and liver. Weakly expressed in lung. Does not seem to be expressed in brain, adipose tissue, or muscle.

The protein resides in the microsome membrane. The protein localises to the endoplasmic reticulum membrane. It catalyses the reaction trimethylamine + NADPH + O2 = trimethylamine N-oxide + NADP(+) + H2O. It carries out the reaction N,N-dimethylaniline + NADPH + O2 + H(+) = N,N-dimethylaniline N-oxide + NADP(+) + H2O. The enzyme catalyses hypotaurine + NADPH + O2 + H(+) = taurine + NADP(+) + H2O. The catalysed reaction is (S)-nicotine + NADPH + O2 = trans-(S)-nicotine N(1')-oxide + NADP(+) + H2O. It catalyses the reaction albendazole + NADPH + O2 + H(+) = albendazole S-oxide + NADP(+) + H2O. Essential hepatic enzyme that catalyzes the oxygenation of a wide variety of nitrogen- and sulfur-containing compounds including drugs as well as dietary compounds. Plays an important role in the metabolism of trimethylamine (TMA), via the production of trimethylamine N-oxide (TMAO) metabolite. TMA is generated by the action of gut microbiota using dietary precursors such as choline, choline containing compounds, betaine or L-carnitine. By regulating TMAO concentration, FMO3 directly impacts both platelet responsiveness and rate of thrombus formation. The polypeptide is Flavin-containing monooxygenase 3 (Fmo3) (Rattus norvegicus (Rat)).